Consider the following 163-residue polypeptide: Phosphopantetheine adenylyltransferase (163 aa).

Thr-10 is a substrate binding site. Residues 10–11 (TF) and His-18 each bind ATP. The substrate site is built by Lys-42, Leu-75, and Arg-89. Residues 90–92 (GVR), Glu-100, and 125–131 (YTYVASS) each bind ATP.

Belongs to the bacterial CoaD family. As to quaternary structure, homohexamer. Requires Mg(2+) as cofactor.

Its subcellular location is the cytoplasm. The catalysed reaction is (R)-4'-phosphopantetheine + ATP + H(+) = 3'-dephospho-CoA + diphosphate. It functions in the pathway cofactor biosynthesis; coenzyme A biosynthesis; CoA from (R)-pantothenate: step 4/5. In terms of biological role, reversibly transfers an adenylyl group from ATP to 4'-phosphopantetheine, yielding dephospho-CoA (dPCoA) and pyrophosphate. This Pelodictyon phaeoclathratiforme (strain DSM 5477 / BU-1) protein is Phosphopantetheine adenylyltransferase.